Consider the following 371-residue polypeptide: Geranylgeranyl transferase type-2 subunit alpha (371 aa).

5 PFTA repeats span residues 45-79, 92-126, 131-165, 177-211, and 242-276; these read YSDE…NNYS, ILNQ…ELVK, NWKY…NMEL, INLD…KIYN, and LLKN…DDLF.

This sequence belongs to the protein prenyltransferase subunit alpha family. Heterodimer of an alpha and a beta subunit.

The catalysed reaction is geranylgeranyl diphosphate + L-cysteinyl-[protein] = S-geranylgeranyl-L-cysteinyl-[protein] + diphosphate. Catalyzes the transfer of a geranyl-geranyl moiety from geranyl-geranyl pyrophosphate to proteins having the C-terminal -XCC or -XCXC, where both cysteines may become modified. Acts on YPT1 and SEC4. This Candida albicans (Yeast) protein is Geranylgeranyl transferase type-2 subunit alpha (BET4).